Consider the following 416-residue polypeptide: Calreticulin (416 aa).

A glycan (N-linked (GlcNAc...) asparagine) is linked at Asn54. Cys108 and Cys140 are disulfide-bonded. Residues Tyr112, Lys114, Tyr131, and Asp138 each contribute to the an alpha-D-glucoside site. 7 repeat units span residues 194–205, 213–224, 230–241, 248–259, 263–273, 277–287, and 291–301. Residues 194–259 form a 4 X approximate repeats region; it reads KQSGSVYTDW…EAKKPEDWDD (66 aa). Residues 209-281 are disordered; sequence KQIKDPEAKK…NPDYKGEWKP (73 aa). Residues 210–255 are compositionally biased toward basic and acidic residues; sequence QIKDPEAKKPEDWEDKEYIPDPEDKKPEGYDDIPKEITDPEAKKPE. The segment at 263-301 is 3 X approximate repeats; that stretch reads GEWTAPTIPNPDYKGEWKPKKIKNPNFKGKWKAPMIDNP. Glu321 is an an alpha-D-glucoside binding site. Over residues 349-378 the composition is skewed to basic and acidic residues; sequence ETWGKNKDAEKAAFDEAEKKKEEEEAKDDP. The interval 349-416 is disordered; sequence ETWGKNKDAE…EDDEDVHDEL (68 aa). Residues 379 to 416 show a composition bias toward acidic residues; sequence TESDDEKPDEEGESDGEGDDESKDIDNEEDDEDVHDEL. The short motif at 413–416 is the Prevents secretion from ER element; sequence HDEL.

This sequence belongs to the calreticulin family.

It localises to the endoplasmic reticulum lumen. In terms of biological role, molecular calcium-binding chaperone promoting folding, oligomeric assembly and quality control in the ER via the calreticulin/calnexin cycle. This lectin may interact transiently with almost all of the monoglucosylated glycoproteins that are synthesized in the ER. The protein is Calreticulin of Berberis stolonifera (Barberry).